The chain runs to 190 residues: Protein A52 (190 aa).

This sequence belongs to the orthopoxvirus A52R protein family. Interacts with host TRAF6 and IRAK2.

Bcl-2-like protein which targets host toll-like receptor signaling complexes to suppress innate immune response. Interacts with host TRAF6 to activate p38 and subsequently induce the expression of several cytokines such as IL-10. Also associates with host IRAK2 to inhibit NF-kappa-B signaling. The protein is Protein A52 of Vaccinia virus (strain Western Reserve) (VACV).